Consider the following 402-residue polypeptide: Bacteriochlorophyllide c C-7(1)-hydroxylase (402 aa).

The Radical SAM core domain maps to 104–359 (VIGMNQDIIN…IKYQDRFDMP (256 aa)). 3 residues coordinate [4Fe-4S] cluster: cysteine 120, cysteine 129, and cysteine 132.

Belongs to the radical SAM superfamily. [4Fe-4S] cluster is required as a cofactor.

The enzyme catalyses a bacteriochlorophyllide c + 2 S-adenosyl-L-methionine + H2O = a bacteriochlorophyllide e + 2 5'-deoxyadenosine + 2 L-methionine + 2 H(+). The catalysed reaction is a bacteriochlorophyllide d + 2 S-adenosyl-L-methionine + H2O = a bacteriochlorophyllide f + 2 5'-deoxyadenosine + 2 L-methionine + 2 H(+). Its pathway is porphyrin-containing compound metabolism; bacteriochlorophyll biosynthesis. Functionally, involved in the biosynthesis of bacteriochlorophyll e (BChl e). Catalyzes two consecutive hydroxylation reactions of the C-7 methyl group of bacteriochlorophyllide c (BChlide c) to form a geminal diol intermediate that spontaneously dehydrates to produce the formyl group of bacteriochlorophyllide e (BChlide e). Also able to catalyze the same reaction for bacteriochlorophyllide d (BChlide d) to give rise to bacteriochlorophyllide f (BChlide f). This chain is Bacteriochlorophyllide c C-7(1)-hydroxylase, found in Chlorobaculum limnaeum.